Consider the following 174-residue polypeptide: Magnetosome protein MamT (174 aa).

At 1-9 (MGTPGGGRR) the chain is on the cytoplasmic side. The helical transmembrane segment at 10–28 (WMTLISITLLMVVGLGLYW) threads the bilayer. Residues 29-174 (DELSLSAGIS…EKKSGIKWLL (146 aa)) are Lumenal-facing. The short motif at 87–107 (VMPGTGMPHPYVGDCIQCHLM) is the MCR (magnetochrome) 1 element. Heme is bound by residues C101, C104, H105, C152, C155, and H156. Positions 138-158 (ILPTTRQPHPPAGRCIKCHDI) match the MCR 2 motif.

The protein belongs to the magnetosome MamT family. Heme serves as cofactor.

The protein resides in the magnetosome membrane. In terms of biological role, may play a role in magnetite crystal maturation. May transfer electrons to balance the Fe(2+)-Fe(3+) ratio during magnetite formation. The protein is Magnetosome protein MamT of Magnetospirillum gryphiswaldense (strain DSM 6361 / JCM 21280 / NBRC 15271 / MSR-1).